Consider the following 268-residue polypeptide: Lipase 1 (268 aa).

The N-terminal stretch at 1–29 is a signal peptide; the sequence is MRRFRLVGFLSSLVLAAGAALTGAATAQA. The active-site Nucleophile is Ser-44. Intrachain disulfides connect Cys-61–Cys-86, Cys-127–Cys-135, and Cys-185–Cys-231. His-250 is an active-site residue.

The protein belongs to the 'GDSL' lipolytic enzyme family. As to quaternary structure, monomer.

It is found in the secreted. It catalyses the reaction a triacylglycerol + H2O = a diacylglycerol + a fatty acid + H(+). Its activity is regulated as follows. Strongly inhibited by Ag(+). The cations Ca(2+), Mg(2+), Co(2+) and Cu(2+) do not significantly reduce the lipolytic activity of SCO1725. Is also inhibited by DTT in vitro, but not by EDTA or by the reagent masking SH-groups, p-hydroxymercuribenzoate (pHMB). Is resistant to PMSF inhibition, except in the presence of Ca(2+). Is also strongly inhibited by 3,4-dichloroisocoumarin (DCI), another inhibitor of serine hydrolases. Addition of tetrahydrofuran and 1,4-dioxane significantly increases (2- and 4- fold, respectively) hydrolytic activity of lipase towards p-nitrophenyl caprylate. Catalyzes the hydrolysis of fatty acid esters with a preference for mid-length acyl chain (C10-C16). Is able to hydrolyze the triacylglycerol triolein and mixed triacylglycerols from a wide range of natural oils; better activity is obtained with corn-, wheat germ- and olive oil that have higher content of linoleic and/or oleic acid (C18:2; C18:1, cis). Tween detergents are also substrates for this enzyme. Displays arylesterase activity towards p-nitrophenyl alkanoate esters and alpha- and beta-naphthyl esters. The sequence is that of Lipase 1 from Streptomyces coelicolor (strain ATCC BAA-471 / A3(2) / M145).